We begin with the raw amino-acid sequence, 720 residues long: Glutaryl-7-aminocephalosporanic-acid acylase (720 aa).

The N-terminal stretch at 1 to 29 (MLRVLHRAASALVMATVIGLAPAVAFALA) is a signal peptide. Residues 190–198 (DPPDLADQG) constitute a propeptide, spacer peptide. S199 functions as the Nucleophile in the catalytic mechanism. Catalysis depends on residues H221 and E653.

Belongs to the peptidase S45 family. Heterotetramer of two alpha and two beta subunits processed from the same precursor.

It localises to the periplasm. The enzyme catalyses (7R)-7-(4-carboxybutanamido)cephalosporanate + H2O = (7R)-7-aminocephalosporanate + glutarate. Functionally, catalyzes the deacylation of 7 beta-(4-carboxybutanamido)cephalosporanic acid (glutaryl-7-aminocephalosporanic acid or GL-7-ACA) to 7-aminocephalosporanic acid (7-ACA). In Pseudomonas sp. (strain SY-77), this protein is Glutaryl-7-aminocephalosporanic-acid acylase.